Reading from the N-terminus, the 984-residue chain is Serine/threonine-protein kinase Nek9 (984 aa).

Ser-2 carries the post-translational modification N-acetylserine. A phosphoserine mark is found at Ser-2, Ser-13, Ser-16, and Ser-20. A disordered region spans residues 14-43 (INSDFGSESGGGGDSGPGPSAVPGPRAGGG). A Phosphotyrosine modification is found at Tyr-52. Residues 52-308 (YIPIRVLGRG…ADALLDLPLL (257 aa)) form the Protein kinase domain. An ATP-binding site is contributed by 58-66 (LGRGAFGEA). Residue Ser-76 is modified to Phosphoserine. Lys-81 contacts ATP. Asp-176 serves as the catalytic Proton acceptor. The residue at position 210 (Thr-210) is a Phosphothreonine; by autocatalysis. Residue Thr-254 is modified to Phosphothreonine. Ser-331 carries the phosphoserine modification. Thr-333 carries the post-translational modification Phosphothreonine. RCC1 repeat units lie at residues 388–444 (KELY…VTDE), 445–498 (GQLY…LTRN), 499–550 (KEVY…LTQS), 551–615 (GKVL…IDER), 616–668 (GRLL…ATDD), and 669–726 (NHIF…IVEK). Residues 732–896 (TIRSNSSGLS…GKALTSAACA (165 aa)) are interaction with NEK6. Ser-741 carries the post-translational modification Phosphoserine. Residues 744–790 (TVVQSSSPGGGIGGGGGGGGGGGGEEEDSQQESETPDPSGGFRGTME) are disordered. Residues 751 to 766 (PGGGIGGGGGGGGGGG) show a composition bias toward gly residues. The segment covering 767 to 778 (GEEEDSQQESET) has biased composition (acidic residues). Residues Ser-808 and Ser-839 each carry the phosphoserine modification. Phosphothreonine is present on Thr-891. Residues 896 to 945 (ACSALQVEVDRLQALVLKCLEEQQKLQQENLQMFTQLQKLNKKLEGGQQV) are a coiled coil. Residues 940-984 (EGGQQVGMHSRGTQTAKEEMEMDPKPDLDSESWCLLGTDSCRPSL) form a disordered region. Ser-949 is modified (phosphoserine). Residues 955-967 (AKEEMEMDPKPDL) are compositionally biased toward basic and acidic residues. Ser-983 is subject to Phosphoserine.

The protein belongs to the protein kinase superfamily. NEK Ser/Thr protein kinase family. NIMA subfamily. As to quaternary structure, homodimer; homodimerization is required to activate NEK7. Binds to Ran GTPase. Has a greater affinity for Ran-GDP over Ran-GTP. Interacts with SSRP1 and SUPT16H, the 2 subunits of the FACT complex. Interacts with DYNLL1; phosphorylation at Ser-949 strongly reduces DYNLL1 binding. It depends on Mg(2+) as a cofactor. In terms of processing, autophosphorylated on serine and threonine residues. When complexed with FACT, exhibits markedly elevated phosphorylation on Thr-210. During mitosis, not phosphorylated on Thr-210. Phosphorylated by CDK1 in vitro.

It localises to the cytoplasm. Its subcellular location is the nucleus. The enzyme catalyses L-seryl-[protein] + ATP = O-phospho-L-seryl-[protein] + ADP + H(+). It catalyses the reaction L-threonyl-[protein] + ATP = O-phospho-L-threonyl-[protein] + ADP + H(+). Activated during mitosis by intramolecular autophosphorylation. Activity and autophosphorylation is activated by manganese &gt;&gt; magnesium ions. It is not cell-cycle regulated but activity is higher in G0-arrested cells. Functionally, pleiotropic regulator of mitotic progression, participating in the control of spindle dynamics and chromosome separation. Phosphorylates different histones, myelin basic protein, beta-casein, and BICD2. Phosphorylates histone H3 on serine and threonine residues and beta-casein on serine residues. Important for G1/S transition and S phase progression. Phosphorylates NEK6 and NEK7 and stimulates their activity by releasing the autoinhibitory functions of Tyr-108 and Tyr-97 respectively. This Mus musculus (Mouse) protein is Serine/threonine-protein kinase Nek9.